The chain runs to 149 residues: Chromophore lyase CpcS/CpeS homolog (149 aa).

The protein belongs to the CpcS/CpeS biliprotein lyase family.

It is found in the plastid. Its subcellular location is the chloroplast. In terms of biological role, might function to covalently attach a chromophore to Cys residue(s) of phycobiliproteins. This chain is Chromophore lyase CpcS/CpeS homolog, found in Porphyra purpurea (Red seaweed).